The following is a 194-amino-acid chain: Imidazoleglycerol-phosphate dehydratase (194 aa).

Belongs to the imidazoleglycerol-phosphate dehydratase family.

The protein resides in the cytoplasm. The catalysed reaction is D-erythro-1-(imidazol-4-yl)glycerol 3-phosphate = 3-(imidazol-4-yl)-2-oxopropyl phosphate + H2O. Its pathway is amino-acid biosynthesis; L-histidine biosynthesis; L-histidine from 5-phospho-alpha-D-ribose 1-diphosphate: step 6/9. The sequence is that of Imidazoleglycerol-phosphate dehydratase from Listeria monocytogenes serotype 4b (strain F2365).